The following is a 632-amino-acid chain: Chaperone protein DnaK (632 aa).

Position 198 is a phosphothreonine; by autocatalysis (Thr198). A disordered region spans residues 524 to 557; that stretch reads RREAVDAKNHADSLVHSTEKALAEHGSKIEDSER.

Belongs to the heat shock protein 70 family.

Functionally, acts as a chaperone. This Nitrobacter hamburgensis (strain DSM 10229 / NCIMB 13809 / X14) protein is Chaperone protein DnaK.